The sequence spans 628 residues: Kelch-like protein diablo (628 aa).

The tract at residues 1–56 (MGDLPGSTGGGSGPAAAGNASGNASSAGNTGLGVAGTTGVDRPPSPARLSHTSEKH) is disordered. The span at 14–29 (PAAAGNASGNASSAGN) shows a compositional bias: low complexity. The BTB domain occupies 74–141 (CDVVLNVGGR…CYTAHIIVEE (68 aa)). Positions 176-278 (CLGIRAFADT…SPKFLVGTVG (103 aa)) constitute a BACK domain. Kelch repeat units follow at residues 325–371 (VLFA…VLND), 373–419 (LYAV…VLDG), 420–466 (FLYA…VLGG), 468–513 (LYAI…VFNN), 515–560 (IYAV…VVNG), and 561–607 (QLYA…VMRA).

Its pathway is protein modification; protein ubiquitination. Probable substrate-specific adapter of an E3 ubiquitin-protein ligase complex which mediates the ubiquitination and subsequent proteasomal degradation of target proteins. May have a role in synapse differentiation and growth. This is Kelch-like protein diablo from Drosophila pseudoobscura pseudoobscura (Fruit fly).